Here is a 692-residue protein sequence, read N- to C-terminus: Methionine--tRNA ligase (692 aa).

The 'HIGH' region motif lies at 15–25 (PYANGPIHLGH). Cys146, Cys149, Cys159, and Cys162 together coordinate Zn(2+). Residues 332 to 336 (KMSKS) carry the 'KMSKS' region motif. ATP is bound at residue Lys335. The segment at 552 to 577 (TTEAAPEKKAKKSAETADVAVDTRSP) is disordered. Basic and acidic residues predominate over residues 556–566 (APEKKAKKSAE). The region spanning 591–692 (DFAKLDLRIA…EGAQPGMRVK (102 aa)) is the tRNA-binding domain.

This sequence belongs to the class-I aminoacyl-tRNA synthetase family. MetG type 1 subfamily. In terms of assembly, homodimer. Requires Zn(2+) as cofactor.

It localises to the cytoplasm. The enzyme catalyses tRNA(Met) + L-methionine + ATP = L-methionyl-tRNA(Met) + AMP + diphosphate. Functionally, is required not only for elongation of protein synthesis but also for the initiation of all mRNA translation through initiator tRNA(fMet) aminoacylation. The protein is Methionine--tRNA ligase of Shewanella sediminis (strain HAW-EB3).